The chain runs to 250 residues: Leucyl/phenylalanyl-tRNA--protein transferase (250 aa).

Belongs to the L/F-transferase family.

It localises to the cytoplasm. It catalyses the reaction N-terminal L-lysyl-[protein] + L-leucyl-tRNA(Leu) = N-terminal L-leucyl-L-lysyl-[protein] + tRNA(Leu) + H(+). The enzyme catalyses N-terminal L-arginyl-[protein] + L-leucyl-tRNA(Leu) = N-terminal L-leucyl-L-arginyl-[protein] + tRNA(Leu) + H(+). The catalysed reaction is L-phenylalanyl-tRNA(Phe) + an N-terminal L-alpha-aminoacyl-[protein] = an N-terminal L-phenylalanyl-L-alpha-aminoacyl-[protein] + tRNA(Phe). Its function is as follows. Functions in the N-end rule pathway of protein degradation where it conjugates Leu, Phe and, less efficiently, Met from aminoacyl-tRNAs to the N-termini of proteins containing an N-terminal arginine or lysine. The protein is Leucyl/phenylalanyl-tRNA--protein transferase of Bordetella avium (strain 197N).